The chain runs to 409 residues: Growth-regulating factor 8 (409 aa).

Composition is skewed to gly residues over residues 1–10 (MLSSCGGHGH) and 27–36 (QQGGGGGGGQ). Residues 1–81 (MLSSCGGHGH…GGGGQMLSFS (81 aa)) are disordered. A compositionally biased stretch (low complexity) spans 56-68 (SSSSFLGSTSSSC). The region spanning 107-142 (PFTPTQWMELEHQALIYKHIAANVSVPSSLLLPIRR) is the QLQ domain. The region spanning 158-202 (DVEPRRCRRTDGKKWRCSRDAVGDQKYCERHINRGRHRSRKHVEG) is the WRC domain. 2 consecutive short sequence motifs (bipartite nuclear localization signal) follow at residues 163–173 (RCRRTDGKKWR) and 191–198 (RGRHRSRK). The segment at 221–242 (SSRGHTVARQKQVKGSAATVSD) is disordered.

Belongs to the GRF family.

It is found in the nucleus. Its function is as follows. Transcription activator that plays a regulatory role in gibberellin-induced stem elongation. The polypeptide is Growth-regulating factor 8 (GRF8) (Oryza sativa subsp. japonica (Rice)).